The primary structure comprises 249 residues: Secreted flagellin C (249 aa).

The secreted form is about 1 kDa larger than the whole cell lysate form, presumably due to post-translational modification. A 22 kDa form is also found in the secreted fraction, probably resulting from proteolysis.

The protein localises to the secreted. The protein resides in the host cell surface. In terms of biological role, plays a role in virulence. This is Secreted flagellin C (flaC) from Campylobacter jejuni subsp. jejuni serotype O:2 (strain ATCC 700819 / NCTC 11168).